The sequence spans 504 residues: GTPase Der (504 aa).

The EngA-type G 1 domain occupies P3–L166. GTP contacts are provided by residues G9–S16, D56–I60, and N118–D121. The interval V171–D190 is disordered. The segment covering D172–D190 has biased composition (acidic residues). In terms of domain architecture, EngA-type G 2 spans I216 to T389. GTP is bound by residues G222–S229, D269–V273, and N334–D337. The 85-residue stretch at K390–N474 folds into the KH-like domain.

Belongs to the TRAFAC class TrmE-Era-EngA-EngB-Septin-like GTPase superfamily. EngA (Der) GTPase family. As to quaternary structure, associates with the 50S ribosomal subunit.

Its function is as follows. GTPase that plays an essential role in the late steps of ribosome biogenesis. This Glaesserella parasuis serovar 5 (strain SH0165) (Haemophilus parasuis) protein is GTPase Der.